The primary structure comprises 165 residues: Phosphopantetheine adenylyltransferase (165 aa).

Serine 9 serves as a coordination point for substrate. Residues 9-10 (SF) and histidine 17 each bind ATP. Substrate contacts are provided by lysine 41, valine 73, and arginine 87. Residues 88 to 90 (GLR), glutamate 98, and 123 to 129 (FTLLSSS) each bind ATP.

Belongs to the bacterial CoaD family. As to quaternary structure, homohexamer. Mg(2+) serves as cofactor.

The protein localises to the cytoplasm. It catalyses the reaction (R)-4'-phosphopantetheine + ATP + H(+) = 3'-dephospho-CoA + diphosphate. The protein operates within cofactor biosynthesis; coenzyme A biosynthesis; CoA from (R)-pantothenate: step 4/5. Its function is as follows. Reversibly transfers an adenylyl group from ATP to 4'-phosphopantetheine, yielding dephospho-CoA (dPCoA) and pyrophosphate. This is Phosphopantetheine adenylyltransferase from Herpetosiphon aurantiacus (strain ATCC 23779 / DSM 785 / 114-95).